Here is a 65-residue protein sequence, read N- to C-terminus: DNA-directed RNA polymerase subunit omega (65 aa).

This sequence belongs to the RNA polymerase subunit omega family. As to quaternary structure, the RNAP catalytic core consists of 2 alpha, 1 beta, 1 beta' and 1 omega subunit. When a sigma factor is associated with the core the holoenzyme is formed, which can initiate transcription.

The enzyme catalyses RNA(n) + a ribonucleoside 5'-triphosphate = RNA(n+1) + diphosphate. Functionally, promotes RNA polymerase assembly. Latches the N- and C-terminal regions of the beta' subunit thereby facilitating its interaction with the beta and alpha subunits. This is DNA-directed RNA polymerase subunit omega from Baumannia cicadellinicola subsp. Homalodisca coagulata.